Consider the following 98-residue polypeptide: Large ribosomal subunit protein uL23 (98 aa).

The protein belongs to the universal ribosomal protein uL23 family. As to quaternary structure, part of the 50S ribosomal subunit. Contacts protein L29, and trigger factor when it is bound to the ribosome.

One of the early assembly proteins it binds 23S rRNA. One of the proteins that surrounds the polypeptide exit tunnel on the outside of the ribosome. Forms the main docking site for trigger factor binding to the ribosome. The polypeptide is Large ribosomal subunit protein uL23 (Nitrosococcus oceani (strain ATCC 19707 / BCRC 17464 / JCM 30415 / NCIMB 11848 / C-107)).